The sequence spans 224 residues: LexA repressor (224 aa).

A DNA-binding region (H-T-H motif) is located at residues 31-51; it reads RAEIAAELGFKSANAAEEHLQ. Active-site for autocatalytic cleavage activity residues include serine 142 and lysine 179.

It belongs to the peptidase S24 family. Homodimer.

The catalysed reaction is Hydrolysis of Ala-|-Gly bond in repressor LexA.. Represses a number of genes involved in the response to DNA damage (SOS response), including recA and lexA. In the presence of single-stranded DNA, RecA interacts with LexA causing an autocatalytic cleavage which disrupts the DNA-binding part of LexA, leading to derepression of the SOS regulon and eventually DNA repair. The sequence is that of LexA repressor from Verminephrobacter eiseniae (strain EF01-2).